The chain runs to 92 residues: Small ribosomal subunit protein uS19 (92 aa).

The segment at 1-27 (MARSIKKGPFADDHLKKKVEAQSGSEK) is disordered. Positions 9–27 (PFADDHLKKKVEAQSGSEK) are enriched in basic and acidic residues.

It belongs to the universal ribosomal protein uS19 family.

Functionally, protein S19 forms a complex with S13 that binds strongly to the 16S ribosomal RNA. In Staphylococcus saprophyticus subsp. saprophyticus (strain ATCC 15305 / DSM 20229 / NCIMB 8711 / NCTC 7292 / S-41), this protein is Small ribosomal subunit protein uS19.